The following is a 269-amino-acid chain: Hemin import ATP-binding protein HmuV (269 aa).

An ABC transporter domain is found at 2–242; that stretch reads LEVIHTGLNI…AMVEACFDLP (241 aa). 34-41 contributes to the ATP binding site; it reads GPNGAGKS.

It belongs to the ABC transporter superfamily. Heme (hemin) importer (TC 3.A.1.14.5) family. The complex is composed of two ATP-binding proteins (HmuV), two transmembrane proteins (HmuU) and a solute-binding protein (HmuT).

It localises to the cell inner membrane. Functionally, part of the ABC transporter complex HmuTUV involved in hemin import. Responsible for energy coupling to the transport system. This Methylobacillus flagellatus (strain ATCC 51484 / DSM 6875 / VKM B-1610 / KT) protein is Hemin import ATP-binding protein HmuV.